A 276-amino-acid chain; its full sequence is Large ribosomal subunit protein uL2 (276 aa).

2 disordered regions span residues 29 to 54 (PEKS…SRRR) and 224 to 276 (AMNP…RGQR). Residues 256–276 (YKTRSKKKPSSKLIVKRRGQR) are compositionally biased toward basic residues.

This sequence belongs to the universal ribosomal protein uL2 family. In terms of assembly, part of the 50S ribosomal subunit. Forms a bridge to the 30S subunit in the 70S ribosome.

In terms of biological role, one of the primary rRNA binding proteins. Required for association of the 30S and 50S subunits to form the 70S ribosome, for tRNA binding and peptide bond formation. It has been suggested to have peptidyltransferase activity; this is somewhat controversial. Makes several contacts with the 16S rRNA in the 70S ribosome. The protein is Large ribosomal subunit protein uL2 of Maridesulfovibrio salexigens (strain ATCC 14822 / DSM 2638 / NCIMB 8403 / VKM B-1763) (Desulfovibrio salexigens).